A 147-amino-acid chain; its full sequence is UPF0306 protein YhbP (147 aa).

It belongs to the UPF0306 family.

The protein is UPF0306 protein YhbP of Escherichia coli O6:K15:H31 (strain 536 / UPEC).